Consider the following 203-residue polypeptide: IMP cyclohydrolase (203 aa).

The protein belongs to the archaeal IMP cyclohydrolase family.

It catalyses the reaction IMP + H2O = 5-formamido-1-(5-phospho-D-ribosyl)imidazole-4-carboxamide. It participates in purine metabolism; IMP biosynthesis via de novo pathway; IMP from 5-formamido-1-(5-phospho-D-ribosyl)imidazole-4-carboxamide: step 1/1. Functionally, catalyzes the cyclization of 5-formylamidoimidazole-4-carboxamide ribonucleotide to IMP. The protein is IMP cyclohydrolase of Methanococcus aeolicus (strain ATCC BAA-1280 / DSM 17508 / OCM 812 / Nankai-3).